The primary structure comprises 1230 residues: ATP-dependent helicase/nuclease subunit A (1230 aa).

Residues 9–480 (STWTDDQWKA…IDLNKNFRSR (472 aa)) form the UvrD-like helicase ATP-binding domain. ATP is bound at residue 30 to 37 (AAAGSGKT). The UvrD-like helicase C-terminal domain maps to 507–796 (QAELKLGASY…RLMTIHSSKG (290 aa)).

This sequence belongs to the helicase family. AddA subfamily. Heterodimer of AddA and AddB/RexB. It depends on Mg(2+) as a cofactor.

The catalysed reaction is Couples ATP hydrolysis with the unwinding of duplex DNA by translocating in the 3'-5' direction.. The enzyme catalyses ATP + H2O = ADP + phosphate + H(+). In terms of biological role, the heterodimer acts as both an ATP-dependent DNA helicase and an ATP-dependent, dual-direction single-stranded exonuclease. Recognizes the chi site generating a DNA molecule suitable for the initiation of homologous recombination. The AddA nuclease domain is required for chi fragment generation; this subunit has the helicase and 3' -&gt; 5' nuclease activities. In Bacillus licheniformis (strain ATCC 14580 / DSM 13 / JCM 2505 / CCUG 7422 / NBRC 12200 / NCIMB 9375 / NCTC 10341 / NRRL NRS-1264 / Gibson 46), this protein is ATP-dependent helicase/nuclease subunit A.